A 309-amino-acid chain; its full sequence is Porphobilinogen deaminase (309 aa).

The residue at position 244 (Cys244) is an S-(dipyrrolylmethanemethyl)cysteine.

The protein belongs to the HMBS family. Monomer. It depends on dipyrromethane as a cofactor.

It carries out the reaction 4 porphobilinogen + H2O = hydroxymethylbilane + 4 NH4(+). It functions in the pathway porphyrin-containing compound metabolism; protoporphyrin-IX biosynthesis; coproporphyrinogen-III from 5-aminolevulinate: step 2/4. Its function is as follows. Tetrapolymerization of the monopyrrole PBG into the hydroxymethylbilane pre-uroporphyrinogen in several discrete steps. The chain is Porphobilinogen deaminase from Listeria welshimeri serovar 6b (strain ATCC 35897 / DSM 20650 / CCUG 15529 / CIP 8149 / NCTC 11857 / SLCC 5334 / V8).